A 628-amino-acid polypeptide reads, in one-letter code: Monoterpene synthase like 1, chloroplastic (628 aa).

Mg(2+)-binding residues include Asp-379, Asp-383, and Asp-531. The DDXXD motif motif lies at 379–383 (DDIYD).

This sequence belongs to the terpene synthase family. Tpsd subfamily. Mg(2+) is required as a cofactor. Mn(2+) serves as cofactor.

The protein resides in the plastid. Its subcellular location is the chloroplast. It functions in the pathway terpene metabolism; oleoresin biosynthesis. The protein operates within secondary metabolite biosynthesis; terpenoid biosynthesis. Monoterpene synthase (TPS) involved in the biosynthesis of monoterpene natural products included in conifer oleoresin secretions and volatile emissions; these compounds contribute to biotic and abiotic stress defense against herbivores and pathogens. The polypeptide is Monoterpene synthase like 1, chloroplastic (Pinus banksiana (Jack pine)).